The sequence spans 309 residues: Taste receptor type 2 member 31 (309 aa).

The Extracellular portion of the chain corresponds to 1–2; it reads MI. Residues 3–23 form a helical membrane-spanning segment; it reads TFLPIIFSILVVVTFVIGNFA. Residues 24-55 are Cytoplasmic-facing; sequence NGFIALVNSTEWVKRQKISFADQILTALAVSR. Residues 56 to 76 traverse the membrane as a helical segment; sequence VGLLWVLLLNWYATVLNPAFY. The Extracellular portion of the chain corresponds to 77-100; sequence SVEVRTTTYNVWAVTNHFSNWLAT. Residues 101 to 121 traverse the membrane as a helical segment; that stretch reads SLSIFYLLKIANFSNLIFLHL. Residues 122–126 lie on the Cytoplasmic side of the membrane; the sequence is KRRVK. A helical transmembrane segment spans residues 127 to 147; the sequence is NVILVMLLGPLLILACHLFMV. Residues 148–181 lie on the Extracellular side of the membrane; sequence NMNEIVRTKEYEENMTWKYILRNAIYHPGMTVTT. Residue Asn-161 is glycosylated (N-linked (GlcNAc...) asparagine). A helical membrane pass occupies residues 182–202; sequence LQNLVPFTLTLISFLLLICSL. Over 203 to 229 the chain is Cytoplasmic; it reads CKHLKKMQLHGKGPQDPSTKVHIKALQ. The helical transmembrane segment at 230-250 threads the bilayer; that stretch reads IVISFLLLCVIYFVSVIISIW. The Extracellular segment spans residues 251-259; the sequence is SFESLGNKP. Residues 260 to 280 form a helical membrane-spanning segment; it reads VFMFCQAIRFSYPSAHPFIVI. The Cytoplasmic segment spans residues 281–309; sequence WGNKKLKQTFLSVLWNVRYWVKGQKPSSL.

This sequence belongs to the G-protein coupled receptor T2R family.

The protein resides in the membrane. Receptor that may play a role in the perception of bitterness and is gustducin-linked. May play a role in sensing the chemical composition of the gastrointestinal content. The activity of this receptor may stimulate alpha gustducin, mediate PLC-beta-2 activation and lead to the gating of TRPM5. In Papio hamadryas (Hamadryas baboon), this protein is Taste receptor type 2 member 31 (TAS2R31).